Here is an 81-residue protein sequence, read N- to C-terminus: Serine/arginine-rich splicing factor 6 (81 aa).

Basic residues predominate over residues 1 to 48 (RSRSRSRRSSRSRSRSISKSRSRSRSRSKGRSRSRSKGRKSRSKSKSK). Positions 1–81 (RSRSRSRRSS…SRSRSRSRSP (81 aa)) are disordered. The span at 62-71 (RSKDEYEKSR) shows a compositional bias: basic and acidic residues. Basic residues predominate over residues 72-81 (SRSRSRSRSP).

Belongs to the splicing factor SR family. In terms of assembly, binds SREK1/SFRS12. Interacts with DYRK1A. Post-translationally, extensively phosphorylated on serine residues in the RS domain. Phosphorylated by DYRK1A, probably in the RS domain. Phosphorylation by DYRK1A modulates alternative splice site selection and inhibits the expression of MAPT/Tau exon 10.

The protein resides in the nucleus. The protein localises to the nucleus speckle. Plays a role in constitutive splicing and modulates the selection of alternative splice sites. Plays a role in the alternative splicing of MAPT/Tau exon 10. Binds to alternative exons of TNC pre-mRNA and promotes the expression of alternatively spliced TNC. Plays a role in wound healing and in the regulation of keratinocyte differentiation and proliferation via its role in alternative splicing. This chain is Serine/arginine-rich splicing factor 6 (SRSF6), found in Oryctolagus cuniculus (Rabbit).